The primary structure comprises 122 residues: uncharacterized protein (122 aa).

An N-terminal signal peptide occupies residues 1 to 17 (MKYSSIFSMLSFFILFA).

This is an uncharacterized protein from Escherichia coli (strain K12).